Here is a 401-residue protein sequence, read N- to C-terminus: Large ribosomal subunit protein uL3 (401 aa).

The disordered stretch occupies residues 1 to 21 (MSHRKFSAPRHGHMGFTPKKR).

This sequence belongs to the universal ribosomal protein uL3 family.

It is found in the cytoplasm. The L3 protein is a component of the large subunit of cytoplasmic ribosomes. In Caenorhabditis briggsae, this protein is Large ribosomal subunit protein uL3 (rpl-3).